Here is a 73-residue protein sequence, read N- to C-terminus: Defensin-like protein 10 (73 aa).

Positions 1-28 (MKLSLRLISALLMSVMLLFATGMGPVEA) are cleaved as a signal peptide. Disulfide bonds link Cys31–Cys73, Cys42–Cys62, Cys48–Cys67, and Cys52–Cys69.

Belongs to the DEFL family.

The protein resides in the secreted. Its function is as follows. Confers broad-spectrum resistance to pathogens. This chain is Defensin-like protein 10 (PDF2.6), found in Arabidopsis thaliana (Mouse-ear cress).